The primary structure comprises 286 residues: ATP synthase gamma chain (286 aa).

It belongs to the ATPase gamma chain family. F-type ATPases have 2 components, CF(1) - the catalytic core - and CF(0) - the membrane proton channel. CF(1) has five subunits: alpha(3), beta(3), gamma(1), delta(1), epsilon(1). CF(0) has three main subunits: a, b and c.

It localises to the cell inner membrane. In terms of biological role, produces ATP from ADP in the presence of a proton gradient across the membrane. The gamma chain is believed to be important in regulating ATPase activity and the flow of protons through the CF(0) complex. The protein is ATP synthase gamma chain of Solibacter usitatus (strain Ellin6076).